A 345-amino-acid chain; its full sequence is Protein-glutamate methylesterase/protein-glutamine glutaminase (345 aa).

The 119-residue stretch at 5–123 (KVIVVDDSVL…ELSKMKDDLI (119 aa)) folds into the Response regulatory domain. Position 56 is a 4-aspartylphosphate (aspartate 56). The 191-residue stretch at 153 to 343 (SSDSIEAVVI…DEIIKIVRGL (191 aa)) folds into the CheB-type methylesterase domain. Residues serine 165, histidine 192, and aspartate 285 contribute to the active site.

This sequence belongs to the CheB family. Phosphorylated by CheA. Phosphorylation of the N-terminal regulatory domain activates the methylesterase activity.

The protein resides in the cytoplasm. The enzyme catalyses [protein]-L-glutamate 5-O-methyl ester + H2O = L-glutamyl-[protein] + methanol + H(+). It carries out the reaction L-glutaminyl-[protein] + H2O = L-glutamyl-[protein] + NH4(+). Involved in chemotaxis. Part of a chemotaxis signal transduction system that modulates chemotaxis in response to various stimuli. Catalyzes the demethylation of specific methylglutamate residues introduced into the chemoreceptors (methyl-accepting chemotaxis proteins or MCP) by CheR. Also mediates the irreversible deamidation of specific glutamine residues to glutamic acid. This Clostridium acetobutylicum (strain ATCC 824 / DSM 792 / JCM 1419 / IAM 19013 / LMG 5710 / NBRC 13948 / NRRL B-527 / VKM B-1787 / 2291 / W) protein is Protein-glutamate methylesterase/protein-glutamine glutaminase.